The following is a 424-amino-acid chain: Folate-like transporter 3 (424 aa).

Asn35 carries N-linked (GlcNAc...) asparagine glycosylation. 5 consecutive transmembrane segments (helical) span residues 55 to 75, 78 to 98, 101 to 119, 136 to 156, and 164 to 184; these read VALI…ILII, LSYF…CMQL, LFYG…YIYV, ALLV…GLNW, and IINL…PHVP. Asn254 carries N-linked (GlcNAc...) asparagine glycosylation. 3 helical membrane-spanning segments follow: residues 313 to 333, 361 to 381, and 392 to 412; these read GLLF…CYII, LFGI…AIVI, and FVVY…IFGI.

The protein belongs to the reduced folate carrier (RFC) transporter (TC 2.A.48) family.

The protein localises to the membrane. This is Folate-like transporter 3 (folt-3) from Caenorhabditis elegans.